The following is a 591-amino-acid chain: Homeobox domain-containing transcription factor HOB1 (591 aa).

Residues 1 to 15 (MEGKNEDMHTPRGPE) show a composition bias toward basic and acidic residues. Disordered regions lie at residues 1–37 (MEGK…DMLG) and 148–168 (IAGP…RSPA). A DNA-binding region (homeobox) is located at residues 176 to 223 (IAILRESYARNPNPDRKELERLAARTGRPWNKIREYFRQRRNKLRGLE). Disordered stretches follow at residues 420–463 (DAGL…PRES) and 543–563 (DAIE…ALTE). A compositionally biased stretch (acidic residues) spans 427–441 (QGEEDQPPTVEESDQ). The segment covering 543–560 (DAIERRNAGESKRKRDDA) has biased composition (basic and acidic residues).

The protein localises to the nucleus. General stress-responsive transcription factor that governs multiple stress responses and adaptations. Plays a key role in virulence. Mediates the expression of LAC1, which is the major laccase involved in melanin synthesis. Positively regulates BZP4 induction under conditions of nutrient starvation and basal expression levels of MBS1 and USV101, 3 major transcription factors that independently contribute to melanin production. Also acts as a key regulator of ergosterol gene expression. This chain is Homeobox domain-containing transcription factor HOB1, found in Cryptococcus neoformans var. grubii serotype A (strain H99 / ATCC 208821 / CBS 10515 / FGSC 9487) (Filobasidiella neoformans var. grubii).